The sequence spans 182 residues: Isopentenyl-diphosphate Delta-isomerase (182 aa).

The Mn(2+) site is built by His-25 and His-32. Residues 30–164 (LLHLAFSSWL…PWAFSPWMVM (135 aa)) form the Nudix hydrolase domain. Residue Cys-67 is part of the active site. His-69 serves as a coordination point for Mn(2+). Glu-87 contributes to the Mg(2+) binding site. Residues Glu-114 and Glu-116 each coordinate Mn(2+). The active site involves Glu-116.

Belongs to the IPP isomerase type 1 family. In terms of assembly, homodimer. Mg(2+) is required as a cofactor. Requires Mn(2+) as cofactor.

The protein localises to the cytoplasm. It carries out the reaction isopentenyl diphosphate = dimethylallyl diphosphate. Its pathway is isoprenoid biosynthesis; dimethylallyl diphosphate biosynthesis; dimethylallyl diphosphate from isopentenyl diphosphate: step 1/1. Catalyzes the 1,3-allylic rearrangement of the homoallylic substrate isopentenyl (IPP) to its highly electrophilic allylic isomer, dimethylallyl diphosphate (DMAPP). This Escherichia coli (strain ATCC 8739 / DSM 1576 / NBRC 3972 / NCIMB 8545 / WDCM 00012 / Crooks) protein is Isopentenyl-diphosphate Delta-isomerase.